The following is a 101-amino-acid chain: uncharacterized protein (101 aa).

An N-terminal signal peptide occupies residues 1 to 24; it reads MILMFRMNKGMSFITLLFSLALFS.

This is an uncharacterized protein from Haemophilus influenzae (strain ATCC 51907 / DSM 11121 / KW20 / Rd).